Reading from the N-terminus, the 62-residue chain is Antitoxin VbhA (62 aa).

Positions 20–25 match the Inhibitory (S/T)XXXE(G/N) motif motif; sequence SQRLEG. Residue Glu-24 participates in ATP binding.

In terms of assembly, interacts with VbhT.

Antitoxin component of type II toxin-antitoxin (TA) system VbhT-VbhA. Acts by inhibiting the adenylyltransferase activity of VbhT; competes with ATP-binding and prevents productive ATP-binding to VbhT. The protein is Antitoxin VbhA of Bartonella schoenbuchensis (strain DSM 13525 / NCTC 13165 / R1).